Here is a 496-residue protein sequence, read N- to C-terminus: ATP synthase subunit beta, chloroplastic (496 aa).

Residue 170–177 coordinates ATP; it reads GGAGVGKT.

Belongs to the ATPase alpha/beta chains family. As to quaternary structure, F-type ATPases have 2 components, CF(1) - the catalytic core - and CF(0) - the membrane proton channel. CF(1) has five subunits: alpha(3), beta(3), gamma(1), delta(1), epsilon(1). CF(0) has four main subunits: a(1), b(1), b'(1) and c(9-12).

Its subcellular location is the plastid. The protein localises to the chloroplast thylakoid membrane. The catalysed reaction is ATP + H2O + 4 H(+)(in) = ADP + phosphate + 5 H(+)(out). In terms of biological role, produces ATP from ADP in the presence of a proton gradient across the membrane. The catalytic sites are hosted primarily by the beta subunits. This is ATP synthase subunit beta, chloroplastic from Dioscorea elephantipes (Elephant's foot yam).